A 61-amino-acid chain; its full sequence is Small ribosomal subunit protein uS14B (61 aa).

Residues C24, C27, C40, and C43 each coordinate Zn(2+).

Belongs to the universal ribosomal protein uS14 family. Zinc-binding uS14 subfamily. Part of the 30S ribosomal subunit. Contacts proteins S3 and S10. It depends on Zn(2+) as a cofactor.

Its function is as follows. Binds 16S rRNA, required for the assembly of 30S particles and may also be responsible for determining the conformation of the 16S rRNA at the A site. The sequence is that of Small ribosomal subunit protein uS14B from Mycolicibacterium gilvum (strain PYR-GCK) (Mycobacterium gilvum (strain PYR-GCK)).